Here is a 343-residue protein sequence, read N- to C-terminus: Diterpene cyclase DtcycB (343 aa).

Positions 219, 223, and 227 each coordinate Mg(2+).

This sequence belongs to the terpene synthase family. In terms of assembly, homodimer. Requires Mg(2+) as cofactor.

It catalyses the reaction (2E,6E,10E)-geranylgeranyl diphosphate + H2O = (R)-nephthenol + diphosphate. It carries out the reaction (2E,6E,10E)-geranylgeranyl diphosphate = (R)-cembrene A + diphosphate. The enzyme catalyses (2E,6E,10E)-geranylgeranyl diphosphate + H2O = (1S,4E,8E,12E)-2,2,5,9,13-pentamethylcyclopentadeca-4,8,12-trien-1-ol + diphosphate. In terms of biological role, diterpene cyclases that can form multiple diterpene products. The chain is Diterpene cyclase DtcycB from Streptomyces sp.